Consider the following 170-residue polypeptide: Protein-export protein SecB (170 aa).

The protein belongs to the SecB family. As to quaternary structure, homotetramer, a dimer of dimers. One homotetramer interacts with 1 SecA dimer.

It localises to the cytoplasm. Its function is as follows. One of the proteins required for the normal export of preproteins out of the cell cytoplasm. It is a molecular chaperone that binds to a subset of precursor proteins, maintaining them in a translocation-competent state. It also specifically binds to its receptor SecA. This is Protein-export protein SecB from Pasteurella multocida (strain Pm70).